The following is a 51-amino-acid chain: Methionine aminopeptidase (51 aa).

The protein belongs to the peptidase M24A family. Methionine aminopeptidase type 1 subfamily. In terms of assembly, monomer. Co(2+) is required as a cofactor. The cofactor is Zn(2+). It depends on Mn(2+) as a cofactor. Requires Fe(2+) as cofactor.

It catalyses the reaction Release of N-terminal amino acids, preferentially methionine, from peptides and arylamides.. Removes the N-terminal methionine from nascent proteins. The N-terminal methionine is often cleaved when the second residue in the primary sequence is small and uncharged (Met-Ala-, Cys, Gly, Pro, Ser, Thr, or Val). Requires deformylation of the N(alpha)-formylated initiator methionine before it can be hydrolyzed. This chain is Methionine aminopeptidase (map), found in Geobacillus stearothermophilus (Bacillus stearothermophilus).